The chain runs to 242 residues: Type III pantothenate kinase (242 aa).

6–13 (DIGNSVAK) provides a ligand contact to ATP. Substrate is bound by residues tyrosine 86 and 93–96 (GMDR). Aspartate 95 acts as the Proton acceptor in catalysis. Aspartate 116 lines the K(+) pocket. Threonine 119 contacts ATP. Residue threonine 171 coordinates substrate.

This sequence belongs to the type III pantothenate kinase family. Homodimer. Requires NH4(+) as cofactor. K(+) serves as cofactor.

It localises to the cytoplasm. The catalysed reaction is (R)-pantothenate + ATP = (R)-4'-phosphopantothenate + ADP + H(+). It participates in cofactor biosynthesis; coenzyme A biosynthesis; CoA from (R)-pantothenate: step 1/5. Its function is as follows. Catalyzes the phosphorylation of pantothenate (Pan), the first step in CoA biosynthesis. This is Type III pantothenate kinase from Phocaeicola vulgatus (strain ATCC 8482 / DSM 1447 / JCM 5826 / CCUG 4940 / NBRC 14291 / NCTC 11154) (Bacteroides vulgatus).